An 813-amino-acid chain; its full sequence is Protein SBE22 (813 aa).

Disordered stretches follow at residues 1–66 (MIRP…HGHA), 107–240 (EIFS…GEFG), and 331–359 (QKDSATNSSSTITERITPGENQSQNNRES). Basic and acidic residues predominate over residues 56–66 (RPSDNLFHGHA). Residues 107-121 (EIFSTSSSDTQSNIS) are compositionally biased toward low complexity. The span at 127 to 138 (SEDHSFGMDKSV) shows a compositional bias: basic and acidic residues. 3 stretches are compositionally biased toward polar residues: residues 139-160 (DNSSTNATLTNRSIENRSNGDS), 169-200 (VSVNRSTKSGNNPLQRTQSETISVNMSHNRSM), and 214-234 (KNSSIPNLRYNSQPQQDNRSV).

The protein belongs to the SBE2 family.

Its subcellular location is the cytoplasm. It is found in the golgi apparatus. Functionally, with SBE2, is involved in cell wall integrity and polarity processes like bud growth. The sequence is that of Protein SBE22 (SBE22) from Candida glabrata (strain ATCC 2001 / BCRC 20586 / JCM 3761 / NBRC 0622 / NRRL Y-65 / CBS 138) (Yeast).